The sequence spans 2104 residues: Myosin type-2 heavy chain 2 (2104 aa).

The 51-residue stretch at 35–85 folds into the Myosin N-terminal SH3-like domain; sequence DERTWIWIPDSKESFVKAWIVEDLGEKYRVKLERDGSERIVDGFDAEKVNP. In terms of domain architecture, Myosin motor spans 89–767; the sequence is DMVDDMAALT…VLGSLEDRRN (679 aa). ATP is bound at residue 182–189; the sequence is GESGAGKT. An actin-binding region spans residues 646–660; sequence LSSLMHQLEATQPHF. Residues 829–2104 are a coiled coil; the sequence is LGTTQTDEYL…RSNRSPSVLR (1276 aa). Disordered stretches follow at residues 1245–1278 and 1398–1426; these read NRSV…DGNN and MEFT…SKRS. A compositionally biased stretch (polar residues) spans 1246-1259; the sequence is RSVTQHTLDGNSPH. The segment covering 1261–1278 has biased composition (basic and acidic residues); the sequence is SFEEKHSGDPLKRIDGNN. A compositionally biased stretch (polar residues) spans 1409 to 1424; it reads SKISNLPSSQPGSPSK. Residue Ser-1421 is modified to Phosphoserine.

Belongs to the TRAFAC class myosin-kinesin ATPase superfamily. Myosin family. In terms of assembly, binds to cdc4 and rlc1.

Stabilizes the F-actin cables forming the F-actin ring that surrounds the nucleus during interphase. May work in conjunction with myo2. In Schizosaccharomyces pombe (strain 972 / ATCC 24843) (Fission yeast), this protein is Myosin type-2 heavy chain 2 (myo3).